We begin with the raw amino-acid sequence, 179 residues long: ATP synthase subunit delta (179 aa).

This sequence belongs to the ATPase delta chain family. In terms of assembly, F-type ATPases have 2 components, F(1) - the catalytic core - and F(0) - the membrane proton channel. F(1) has five subunits: alpha(3), beta(3), gamma(1), delta(1), epsilon(1). F(0) has three main subunits: a(1), b(2) and c(10-14). The alpha and beta chains form an alternating ring which encloses part of the gamma chain. F(1) is attached to F(0) by a central stalk formed by the gamma and epsilon chains, while a peripheral stalk is formed by the delta and b chains.

It localises to the cell inner membrane. Its function is as follows. F(1)F(0) ATP synthase produces ATP from ADP in the presence of a proton or sodium gradient. F-type ATPases consist of two structural domains, F(1) containing the extramembraneous catalytic core and F(0) containing the membrane proton channel, linked together by a central stalk and a peripheral stalk. During catalysis, ATP synthesis in the catalytic domain of F(1) is coupled via a rotary mechanism of the central stalk subunits to proton translocation. Functionally, this protein is part of the stalk that links CF(0) to CF(1). It either transmits conformational changes from CF(0) to CF(1) or is implicated in proton conduction. In Acidithiobacillus ferrooxidans (strain ATCC 23270 / DSM 14882 / CIP 104768 / NCIMB 8455) (Ferrobacillus ferrooxidans (strain ATCC 23270)), this protein is ATP synthase subunit delta.